A 237-amino-acid chain; its full sequence is Increased recombination centers protein 6 (237 aa).

It belongs to the IRC6 family.

Functionally, involved in gross chromosomal rearrangements (GCRs) and telomere healing. This chain is Increased recombination centers protein 6 (IRC6), found in Saccharomyces cerevisiae (strain ATCC 204508 / S288c) (Baker's yeast).